Reading from the N-terminus, the 274-residue chain is Octanoyltransferase LipM (274 aa).

One can recognise a BPL/LPL catalytic domain in the interval 31-245; that stretch reads GEVPPTLRLY…GFAEALGARL (215 aa). The Acyl-thioester intermediate role is filled by cysteine 147.

It belongs to the octanoyltransferase LipM family. Monomer.

It catalyses the reaction octanoyl-[ACP] + L-lysyl-[protein] = N(6)-octanoyl-L-lysyl-[protein] + holo-[ACP] + H(+). It functions in the pathway protein modification; protein lipoylation via endogenous pathway; protein N(6)-(lipoyl)lysine from octanoyl-[acyl-carrier-protein]. Its function is as follows. Catalyzes the transfer of endogenously produced octanoic acid from octanoyl-acyl-carrier-protein onto the lipoyl domain of GcvH, an intermediate carrier during protein lipoylation. This Kyrpidia tusciae (strain DSM 2912 / NBRC 15312 / T2) (Bacillus tusciae) protein is Octanoyltransferase LipM.